A 484-amino-acid polypeptide reads, in one-letter code: Aspartyl/glutamyl-tRNA(Asn/Gln) amidotransferase subunit B (484 aa).

This sequence belongs to the GatB/GatE family. GatB subfamily. Heterotrimer of A, B and C subunits.

The enzyme catalyses L-glutamyl-tRNA(Gln) + L-glutamine + ATP + H2O = L-glutaminyl-tRNA(Gln) + L-glutamate + ADP + phosphate + H(+). The catalysed reaction is L-aspartyl-tRNA(Asn) + L-glutamine + ATP + H2O = L-asparaginyl-tRNA(Asn) + L-glutamate + ADP + phosphate + 2 H(+). Its function is as follows. Allows the formation of correctly charged Asn-tRNA(Asn) or Gln-tRNA(Gln) through the transamidation of misacylated Asp-tRNA(Asn) or Glu-tRNA(Gln) in organisms which lack either or both of asparaginyl-tRNA or glutaminyl-tRNA synthetases. The reaction takes place in the presence of glutamine and ATP through an activated phospho-Asp-tRNA(Asn) or phospho-Glu-tRNA(Gln). The polypeptide is Aspartyl/glutamyl-tRNA(Asn/Gln) amidotransferase subunit B (Anaeromyxobacter dehalogenans (strain 2CP-1 / ATCC BAA-258)).